The following is a 353-amino-acid chain: Quinolinate synthase (353 aa).

The iminosuccinate site is built by H47 and S68. C113 serves as a coordination point for [4Fe-4S] cluster. Iminosuccinate-binding positions include 139–141 (YAN) and S156. C200 provides a ligand contact to [4Fe-4S] cluster. Iminosuccinate is bound by residues 226–228 (HPE) and T243. Position 297 (C297) interacts with [4Fe-4S] cluster.

It belongs to the quinolinate synthase family. Type 1 subfamily. Requires [4Fe-4S] cluster as cofactor.

Its subcellular location is the cytoplasm. The catalysed reaction is iminosuccinate + dihydroxyacetone phosphate = quinolinate + phosphate + 2 H2O + H(+). It participates in cofactor biosynthesis; NAD(+) biosynthesis; quinolinate from iminoaspartate: step 1/1. In terms of biological role, catalyzes the condensation of iminoaspartate with dihydroxyacetone phosphate to form quinolinate. The protein is Quinolinate synthase of Pectobacterium atrosepticum (strain SCRI 1043 / ATCC BAA-672) (Erwinia carotovora subsp. atroseptica).